We begin with the raw amino-acid sequence, 255 residues long: Small ribosomal subunit protein uS3c (255 aa).

One can recognise a KH type-2 domain in the interval isoleucine 51–glutamine 124. The interval glutamate 96 to asparagine 121 is disordered. Over residues serine 108–asparagine 121 the composition is skewed to polar residues.

This sequence belongs to the universal ribosomal protein uS3 family. Part of the 30S ribosomal subunit.

The protein localises to the plastid. The protein resides in the chloroplast. The polypeptide is Small ribosomal subunit protein uS3c (rps3) (Chaetosphaeridium globosum (Charophycean green alga)).